Reading from the N-terminus, the 481-residue chain is Squalene epoxidase erg1 (481 aa).

The helical transmembrane segment at His-28–Gly-48 threads the bilayer. Residues Val-38–Leu-39, Glu-58–Ala-59, Arg-66, and Arg-138 each bind FAD. The N-linked (GlcNAc...) asparagine glycan is linked to Asn-146. 2 residues coordinate FAD: Asp-319 and Met-332. The next 2 helical transmembrane spans lie at Lys-425–Leu-445 and Leu-452–Phe-472.

It belongs to the squalene monooxygenase family. FAD is required as a cofactor.

It is found in the endoplasmic reticulum membrane. The protein localises to the microsome membrane. The catalysed reaction is squalene + reduced [NADPH--hemoprotein reductase] + O2 = (S)-2,3-epoxysqualene + oxidized [NADPH--hemoprotein reductase] + H2O + H(+). Its pathway is steroid metabolism; ergosterol biosynthesis. Squalene epoxidase; part of the third module of ergosterol biosynthesis pathway that includes the late steps of the pathway. Erg1 catalyzes the epoxidation of squalene into 2,3-epoxysqualene. The third module or late pathway involves the ergosterol synthesis itself through consecutive reactions that mainly occur in the endoplasmic reticulum (ER) membrane. Firstly, the squalene synthase erg9 catalyzes the condensation of 2 farnesyl pyrophosphate moieties to form squalene, which is the precursor of all steroids. Squalene synthase is crucial for balancing the incorporation of farnesyl diphosphate (FPP) into sterol and nonsterol isoprene synthesis. Secondly, squalene is converted into lanosterol by the consecutive action of the squalene epoxidase erg1 and the lanosterol synthase erg7. Then, the delta(24)-sterol C-methyltransferase erg6 methylates lanosterol at C-24 to produce eburicol. Eburicol is the substrate of the sterol 14-alpha demethylase encoded by cyp51A and cyp51B, to yield 4,4,24-trimethyl ergosta-8,14,24(28)-trienol. The C-14 reductase erg24 then reduces the C14=C15 double bond which leads to 4,4-dimethylfecosterol. A sequence of further demethylations at C-4, involving the C-4 demethylation complex containing the C-4 methylsterol oxidases erg25A or erg25B, the sterol-4-alpha-carboxylate 3-dehydrogenase erg26 and the 3-keto-steroid reductase erg27, leads to the production of fecosterol via 4-methylfecosterol. The C-8 sterol isomerase erg2 then catalyzes the reaction which results in unsaturation at C-7 in the B ring of sterols and thus converts fecosterol to episterol. The sterol-C5-desaturase erg3B then catalyzes the introduction of a C-5 double bond in the B ring to produce 5-dehydroepisterol. The 2 other sterol-C5-desaturases, erg3A and erg3C, seem to be less important in ergosterol biosynthesis. The C-22 sterol desaturase erg5 further converts 5-dehydroepisterol into ergosta-5,7,22,24(28)-tetraen-3beta-ol by forming the C-22(23) double bond in the sterol side chain. Finally, ergosta-5,7,22,24(28)-tetraen-3beta-ol is substrate of the C-24(28) sterol reductases erg4A and erg4B to produce ergosterol. Possible alternative sterol biosynthetic pathways might exist from fecosterol to ergosterol, depending on the activities of the erg3 isoforms. This Aspergillus fumigatus (strain ATCC MYA-4609 / CBS 101355 / FGSC A1100 / Af293) (Neosartorya fumigata) protein is Squalene epoxidase erg1.